We begin with the raw amino-acid sequence, 1303 residues long: Endoplasmic reticulum transmembrane helix translocase spfA (1303 aa).

2 helical membrane-spanning segments follow: residues 25 to 45 and 57 to 77; these read LHAY…VYLS and EWTF…WLMT. An A-domain; part 1 region spans residues 158-191; the sequence is KPPVKVFQQAQGLTSKEEIDRIQHHYGDNTFDIP. The next 2 helical transmembrane spans lie at 201 to 221 and 223 to 243; these read EHAV…WMLD and YWYY…TVVW. The segment at 256–408 is A-domain; part 2; sequence NIKPYDVWVY…LVRTMIYSTE (153 aa). N287 is a glycosylation site (N-linked (GlcNAc...) asparagine). A helical transmembrane segment spans residues 415–435; it reads VEALLFILFLLIFAIAAAWYV. N474 is a glycosylation site (N-linked (GlcNAc...) asparagine). The P-domain; part 1 stretch occupies residues 484–513; it reads AIFCTEPFRIPFAGRVDVACFDKTGTLTGE. D505 serves as the catalytic 4-aspartylphosphate intermediate. Mg(2+) contacts are provided by D505 and T507. 505–507 provides a ligand contact to ATP; sequence DKT. Residues 515 to 721 form an N-domain region; that stretch reads LVVDGIAGLT…FAGFLVLQCP (207 aa). N-linked (GlcNAc...) asparagine glycosylation occurs at N589. F616 and R678 together coordinate ATP. A P-domain; part 2 region spans residues 724 to 883; sequence EDAIKAVRML…HVGVALLNGS (160 aa). A glycan (N-linked (GlcNAc...) asparagine) is linked at N734. Residues D746 and 862 to 866 contribute to the ATP site; that span reads DGTND. Position 862 (D862) interacts with Mg(2+). Residues 884–1019 form an arm-like region; sequence PEDLAKIAEH…ELDDSEPPTI (136 aa). Residue N958 is glycosylated (N-linked (GlcNAc...) asparagine). The P-domain; part 3 stretch occupies residues 1020–1035; the sequence is KLGDASVAAPFTSKLA. 5 consecutive transmembrane segments (helical) span residues 1060 to 1080, 1082 to 1102, 1122 to 1142, 1201 to 1221, and 1239 to 1259; these read ILAL…LDGI, FGDG…LSIS, VYII…LIYL, AMYW…TEFI, and VTLT…ENVL. The interval 1277-1303 is disordered; it reads DQLQREMERKKQEELETQAEKERQRKV.

The protein belongs to the cation transport ATPase (P-type) (TC 3.A.3) family. Type V subfamily. Mg(2+) serves as cofactor.

The protein localises to the endoplasmic reticulum membrane. The catalysed reaction is [protein]-with a C-terminal TM segment(out) + ATP + H2O = [protein]-with a C-terminal TM segment(in) + ADP + phosphate + H(+). Its activity is regulated as follows. The ATPase activity is stimulated by phosphatidylinositol 4-phosphate (PI4P). Its function is as follows. Endoplasmic reticulum (ER) translocase required to remove mitochondrial transmembrane proteins mistargeted to the endoplasmic reticulum. Acts as a dislocase that mediates the ATP-dependent extraction of mislocalized mitochondrial transmembrane proteins from the endoplasmic reticulum membrane. Works in concert with the ER Ca(2+) pump srcA to support ER homeostasis. With srcA, also supports redox homeostasis and virulence. This chain is Endoplasmic reticulum transmembrane helix translocase spfA, found in Aspergillus fumigatus (strain ATCC MYA-4609 / CBS 101355 / FGSC A1100 / Af293) (Neosartorya fumigata).